The chain runs to 158 residues: MIEKVPMTRGGHAALADELKKRQSVDRPRIIEHIAEARSHGDLSENAEYHAAKEDQSHNEGRIAELEDKLARAEIIDVSKLSGDTIKFGATVTLIDEDTDKKAVWQIVGEAEADAKKGRISITSPLARALIGKKKGASVEVVAPGGAKAYEITKVEWR.

Positions 41–61 (GDLSENAEYHAAKEDQSHNEG) are disordered. Positions 51–74 (AAKEDQSHNEGRIAELEDKLARAE) form a coiled coil.

The protein belongs to the GreA/GreB family.

Necessary for efficient RNA polymerase transcription elongation past template-encoded arresting sites. The arresting sites in DNA have the property of trapping a certain fraction of elongating RNA polymerases that pass through, resulting in locked ternary complexes. Cleavage of the nascent transcript by cleavage factors such as GreA or GreB allows the resumption of elongation from the new 3'terminus. GreA releases sequences of 2 to 3 nucleotides. The protein is Transcription elongation factor GreA of Nitrobacter hamburgensis (strain DSM 10229 / NCIMB 13809 / X14).